The chain runs to 558 residues: Probable beta-glucosidase btgE (558 aa).

The signal sequence occupies residues 1–18 (MKAAILATAAALTGSALA). Disordered regions lie at residues 64–105 (STPS…PETP) and 251–305 (LPSS…QMGM). Composition is skewed to low complexity over residues 76–105 (PETTSTEEVTTTLHSTSTSTVTVTATPETP) and 252–292 (PSSS…SSSA). Residues 293 to 305 (EVPQTTGSGQMGM) show a composition bias toward polar residues. The active-site Proton donor is Glu399. The active-site Nucleophile is the Glu495.

It belongs to the glycosyl hydrolase 17 family.

Its subcellular location is the secreted. It localises to the cell wall. It carries out the reaction Hydrolysis of terminal, non-reducing beta-D-glucosyl residues with release of beta-D-glucose.. It functions in the pathway glycan metabolism; cellulose degradation. Its function is as follows. Beta-glucosidases are one of a number of cellulolytic enzymes involved in the degradation of cellulosic biomass. Catalyzes the last step releasing glucose from the inhibitory cellobiose. The chain is Probable beta-glucosidase btgE (btgE) from Aspergillus terreus (strain NIH 2624 / FGSC A1156).